The sequence spans 404 residues: Snake venom metalloproteinase H5 (404 aa).

The signal sequence occupies residues 1–6 (FPYQGS). The propeptide occupies 7 to 177 (SIMLESGKVN…KPSWVNLTPK (171 aa)). The 196-residue stretch at 184–379 (TSVNLQLVVD…KKPKCIHKKS (196 aa)) folds into the Peptidase M12B domain. 3 disulfide bridges follow: Cys-295–Cys-374, Cys-336–Cys-358, and Cys-338–Cys-341. His-320 contributes to the Zn(2+) binding site. The active site involves Glu-321. Zn(2+) contacts are provided by His-324 and His-330. Positions 379 to 404 (SLKTDTVSTSVSGNEPLDDNVDGFHA) are excised as a propeptide. Positions 385-404 (VSTSVSGNEPLDDNVDGFHA) are disordered. Positions 394–404 (PLDDNVDGFHA) are enriched in acidic residues.

In terms of assembly, monomer. Requires Zn(2+) as cofactor. In terms of tissue distribution, expressed by the venom gland.

The protein localises to the secreted. Its function is as follows. This probable venom zinc protease is not hemorrhagic when 3 ug are injected onto the back skin of guinea pig. The protein is Snake venom metalloproteinase H5 of Deinagkistrodon acutus (Hundred-pace snake).